A 447-amino-acid chain; its full sequence is Trimethylamine monooxygenase (447 aa).

6 residues coordinate FAD: serine 13, glutamate 38, glutamine 40, leucine 46, tryptophan 47, and histidine 63. Residues tryptophan 71 and asparagine 73 each contribute to the NADP(+) site. 2 residues coordinate FAD: asparagine 73 and valine 126. Residues tyrosine 173, alanine 205, serine 206, serine 208, and arginine 229 each contribute to the NADP(+) site. Glutamine 318 and threonine 321 together coordinate FAD. Residue arginine 413 coordinates NADP(+).

It belongs to the FMO family. The cofactor is FAD.

It catalyses the reaction trimethylamine + NADPH + O2 = trimethylamine N-oxide + NADP(+) + H2O. Functionally, catalyzes the oxidation of trimethylamine (TMA) to produce trimethylamine N-oxide (TMAO). TMA is the best substrate, but the enzyme can also oxidize methimazole, indole and dimethylamine (DMA). The protein is Trimethylamine monooxygenase of Roseovarius nubinhibens (strain ATCC BAA-591 / DSM 15170 / ISM).